Reading from the N-terminus, the 207-residue chain is Uracil phosphoribosyltransferase (207 aa).

Residues R77, R102, and 129-137 (DPMLATGVS) each bind 5-phospho-alpha-D-ribose 1-diphosphate. Residues I192 and 197-199 (GDA) contribute to the uracil site. Residue D198 coordinates 5-phospho-alpha-D-ribose 1-diphosphate.

It belongs to the UPRTase family. It depends on Mg(2+) as a cofactor.

The enzyme catalyses UMP + diphosphate = 5-phospho-alpha-D-ribose 1-diphosphate + uracil. It functions in the pathway pyrimidine metabolism; UMP biosynthesis via salvage pathway; UMP from uracil: step 1/1. Its activity is regulated as follows. Allosterically activated by GTP. Its function is as follows. Catalyzes the conversion of uracil and 5-phospho-alpha-D-ribose 1-diphosphate (PRPP) to UMP and diphosphate. The sequence is that of Uracil phosphoribosyltransferase from Fervidobacterium nodosum (strain ATCC 35602 / DSM 5306 / Rt17-B1).